An 854-amino-acid polypeptide reads, in one-letter code: DNA mismatch repair protein MutS (854 aa).

Residue 615-622 (GPNMGGKS) coordinates ATP.

The protein belongs to the DNA mismatch repair MutS family.

In terms of biological role, this protein is involved in the repair of mismatches in DNA. It is possible that it carries out the mismatch recognition step. This protein has a weak ATPase activity. This chain is DNA mismatch repair protein MutS, found in Aliivibrio fischeri (strain MJ11) (Vibrio fischeri).